Reading from the N-terminus, the 376-residue chain is N-acetyldiaminopimelate deacetylase (376 aa).

D69 is a catalytic residue. E128 (proton acceptor) is an active-site residue.

Belongs to the peptidase M20A family. N-acetyldiaminopimelate deacetylase subfamily.

It catalyses the reaction N-acetyl-(2S,6S)-2,6-diaminopimelate + H2O = (2S,6S)-2,6-diaminopimelate + acetate. It functions in the pathway amino-acid biosynthesis; L-lysine biosynthesis via DAP pathway; LL-2,6-diaminopimelate from (S)-tetrahydrodipicolinate (acetylase route): step 3/3. Its function is as follows. Catalyzes the conversion of N-acetyl-diaminopimelate to diaminopimelate and acetate. The polypeptide is N-acetyldiaminopimelate deacetylase (Streptococcus pneumoniae serotype 4 (strain ATCC BAA-334 / TIGR4)).